A 137-amino-acid polypeptide reads, in one-letter code: ATP synthase epsilon chain, chloroplastic (137 aa).

Belongs to the ATPase epsilon chain family. As to quaternary structure, F-type ATPases have 2 components, CF(1) - the catalytic core - and CF(0) - the membrane proton channel. CF(1) has five subunits: alpha(3), beta(3), gamma(1), delta(1), epsilon(1). CF(0) has three main subunits: a, b and c.

It is found in the plastid. The protein localises to the chloroplast thylakoid membrane. In terms of biological role, produces ATP from ADP in the presence of a proton gradient across the membrane. The chain is ATP synthase epsilon chain, chloroplastic from Pisum sativum (Garden pea).